A 65-amino-acid polypeptide reads, in one-letter code: Kappa-scoloptoxin(04)-Ssd1a (65 aa).

The N-terminal stretch at 1-24 is a signal peptide; it reads MKKTCVVSVFLVLLLLKFHDLSMG. The propeptide occupies 25–36; sequence EEISPLKKVAPR. 2 disulfides stabilise this stretch: cysteine 42/cysteine 53 and cysteine 47/cysteine 60.

As to expression, expressed by the venom gland.

The protein resides in the secreted. In terms of biological role, voltage-gated potassium channel inhibitor. The protein is Kappa-scoloptoxin(04)-Ssd1a of Scolopendra dehaani (Thai centipede).